Consider the following 229-residue polypeptide: Ribonuclease 3 (229 aa).

One can recognise an RNase III domain in the interval Val3–Asn125. Residue Glu38 participates in Mg(2+) binding. Asp42 is a catalytic residue. Positions 111 and 114 each coordinate Mg(2+). Residue Glu114 is part of the active site. The region spanning Asp155–His225 is the DRBM domain.

This sequence belongs to the ribonuclease III family. Homodimer. Mg(2+) serves as cofactor.

The protein resides in the cytoplasm. The enzyme catalyses Endonucleolytic cleavage to 5'-phosphomonoester.. Functionally, digests double-stranded RNA. Involved in the processing of primary rRNA transcript to yield the immediate precursors to the large and small rRNAs (23S and 16S). Processes some mRNAs, and tRNAs when they are encoded in the rRNA operon. Processes pre-crRNA and tracrRNA of type II CRISPR loci if present in the organism. In Blochmanniella pennsylvanica (strain BPEN), this protein is Ribonuclease 3.